Reading from the N-terminus, the 676-residue chain is DNA ligase (676 aa).

NAD(+)-binding positions include 32 to 36 (DAEYD), 81 to 82 (SL), and Glu-113. Lys-115 functions as the N6-AMP-lysine intermediate in the catalytic mechanism. Residues Arg-136, Glu-173, Lys-291, and Lys-315 each coordinate NAD(+). 4 residues coordinate Zn(2+): Cys-409, Cys-412, Cys-427, and Cys-433. Residues 595 to 676 (SEKTYFFNKK…LNSLIRIKEQ (82 aa)) enclose the BRCT domain.

It belongs to the NAD-dependent DNA ligase family. LigA subfamily. The cofactor is Mg(2+). It depends on Mn(2+) as a cofactor.

The enzyme catalyses NAD(+) + (deoxyribonucleotide)n-3'-hydroxyl + 5'-phospho-(deoxyribonucleotide)m = (deoxyribonucleotide)n+m + AMP + beta-nicotinamide D-nucleotide.. DNA ligase that catalyzes the formation of phosphodiester linkages between 5'-phosphoryl and 3'-hydroxyl groups in double-stranded DNA using NAD as a coenzyme and as the energy source for the reaction. It is essential for DNA replication and repair of damaged DNA. The polypeptide is DNA ligase (Buchnera aphidicola subsp. Acyrthosiphon pisum (strain Tuc7)).